Consider the following 140-residue polypeptide: MQERTLSILKPDVVERGIIGNVISYIEAAGLKVVAQRMCRLTVSQAEEFYDVHRDRPFFPELVKFMTSGPVVVQVLEGESAIAVYRDVMGATNPKEAAKGTIRADFAESIDANCVHGSDNADNAKREIMFFFGECEIFKR.

ATP is bound by residues Lys10, Phe58, Arg86, Thr92, Arg103, and Asn113. His116 (pros-phosphohistidine intermediate) is an active-site residue.

Belongs to the NDK family. Homotetramer. Mg(2+) is required as a cofactor.

The protein localises to the cytoplasm. The enzyme catalyses a 2'-deoxyribonucleoside 5'-diphosphate + ATP = a 2'-deoxyribonucleoside 5'-triphosphate + ADP. It carries out the reaction a ribonucleoside 5'-diphosphate + ATP = a ribonucleoside 5'-triphosphate + ADP. In terms of biological role, major role in the synthesis of nucleoside triphosphates other than ATP. The ATP gamma phosphate is transferred to the NDP beta phosphate via a ping-pong mechanism, using a phosphorylated active-site intermediate. This chain is Nucleoside diphosphate kinase, found in Anaplasma phagocytophilum (strain HZ).